The chain runs to 292 residues: tRNA pseudouridine synthase B (292 aa).

The active-site Nucleophile is D38.

It belongs to the pseudouridine synthase TruB family. Type 1 subfamily.

The enzyme catalyses uridine(55) in tRNA = pseudouridine(55) in tRNA. Functionally, responsible for synthesis of pseudouridine from uracil-55 in the psi GC loop of transfer RNAs. The sequence is that of tRNA pseudouridine synthase B from Streptococcus gordonii (strain Challis / ATCC 35105 / BCRC 15272 / CH1 / DL1 / V288).